A 175-amino-acid polypeptide reads, in one-letter code: MAVGPRYFVPFRRRREGKTDYYKRGKLIVAEQPRMVVRKTNRHIIVQMIVAEMEGDKTLVTANSAELLDYGYKGSTSNTPAAYLTGMLFAVKALNADHPAAILDIGLNRATYGAKVFAALKGAVEAGLDVPHGEEILPADERVKGEHIAAYAPDRAGDLVENVESAAQTIMKELA.

It belongs to the universal ribosomal protein uL18 family. In terms of assembly, part of the 50S ribosomal subunit. Contacts the 5S and 23S rRNAs.

In terms of biological role, this is one of the proteins that bind and probably mediate the attachment of the 5S RNA into the large ribosomal subunit, where it forms part of the central protuberance. This is Large ribosomal subunit protein uL18 from Methanosphaerula palustris (strain ATCC BAA-1556 / DSM 19958 / E1-9c).